The chain runs to 1375 residues: BNI1-related protein 1 (1375 aa).

A GBD/FH3 domain is found at 94–490; the sequence is CMPQDASLVE…YLIDSFQVST (397 aa). Positions 520-601 form a coiled coil; sequence QSDEIARRAV…ITTHQRLYDQ (82 aa). At serine 621 the chain carries Phosphoserine. One can recognise an FH1 domain in the interval 659–851; that stretch reads SSYLTDANNE…LVTPPAPPLP (193 aa). The tract at residues 661-684 is disordered; the sequence is YLTDANNENESQNESEDKSKDSLF. At serine 751 the chain carries Phosphoserine. Disordered regions lie at residues 764 to 785, 817 to 839, and 1285 to 1309; these read KLPQ…QSLL, AVPP…GPSN, and KSLL…GEKV. Composition is skewed to pro residues over residues 767 to 781 and 818 to 828; these read QLPP…PPLP and VPPPPPPPPLP. One can recognise an FH2 domain in the interval 868 to 1290; it reads DLKPPPTEKR…YEQRKSLLDM (423 aa). The 35-residue stretch at 1302–1336 folds into the DAD domain; sequence DENDGEKVNRDAVDLLISKLREVKKDPEPLRRRKS.

The protein belongs to the formin homology family. BNI1 subfamily. Interacts with profilin at the FH1 domain.

In terms of biological role, may organize microtubules by mediating spindle positioning and movement in the budding process. Potential target of the RHO family members. In Saccharomyces cerevisiae (strain ATCC 204508 / S288c) (Baker's yeast), this protein is BNI1-related protein 1 (BNR1).